A 340-amino-acid polypeptide reads, in one-letter code: Nitrilase (340 aa).

Positions 7–273 (IRAAAVQIAP…EGMVVADLDM (267 aa)) constitute a CN hydrolase domain. Catalysis depends on glutamate 47, which acts as the Proton acceptor. Residue lysine 129 is part of the active site. Catalysis depends on cysteine 163, which acts as the Nucleophile.

It belongs to the carbon-nitrogen hydrolase superfamily. Nitrilase family. In terms of assembly, forms oligomers.

The enzyme catalyses a nitrile + 2 H2O = a carboxylate + NH4(+). It catalyses the reaction phenylpropanonitrile + 2 H2O = 3-phenylpropanoate + NH4(+). It carries out the reaction an aliphatic nitrile + 2 H2O = a carboxylate + NH4(+). Highly resistant to various miscible cosolvents and tolerates high substrate concentrations. In terms of biological role, catalyzes the hydrolysis of a broad range of nitriles to yield their corresponding carboxylic acid and ammonia. In vitro, shows high activity toward benzylic/unsaturated nitriles. The preferred substrate is trans-cinnamonitrile, followed by mono/di-cyanopyridines and aromatic substituted nitriles, with a moderate activity toward 3-phenylpropionitrile. Shows weaker activity toward the common dinitrile fumaronitrile. Also shows weak activity toward some aliphatic nitriles, including adiponitrile and glutaronitrile, and the arylacetonitrile 2-thiopheneacetonitrile. In Paraburkholderia phymatum (strain DSM 17167 / CIP 108236 / LMG 21445 / STM815) (Burkholderia phymatum), this protein is Nitrilase.